A 383-amino-acid chain; its full sequence is 1-deoxy-D-xylulose 5-phosphate reductoisomerase (383 aa).

Residues T10, G11, S12, I13, G36, K37, N38, and N122 each coordinate NADPH. K123 is a 1-deoxy-D-xylulose 5-phosphate binding site. E124 is an NADPH binding site. Residue D148 coordinates Mn(2+). S149, E150, S174, and H197 together coordinate 1-deoxy-D-xylulose 5-phosphate. E150 contributes to the Mn(2+) binding site. G203 is a binding site for NADPH. Positions 210, 215, 216, and 219 each coordinate 1-deoxy-D-xylulose 5-phosphate. E219 contributes to the Mn(2+) binding site.

It belongs to the DXR family. Mg(2+) serves as cofactor. It depends on Mn(2+) as a cofactor.

The catalysed reaction is 2-C-methyl-D-erythritol 4-phosphate + NADP(+) = 1-deoxy-D-xylulose 5-phosphate + NADPH + H(+). Its pathway is isoprenoid biosynthesis; isopentenyl diphosphate biosynthesis via DXP pathway; isopentenyl diphosphate from 1-deoxy-D-xylulose 5-phosphate: step 1/6. Functionally, catalyzes the NADPH-dependent rearrangement and reduction of 1-deoxy-D-xylulose-5-phosphate (DXP) to 2-C-methyl-D-erythritol 4-phosphate (MEP). This is 1-deoxy-D-xylulose 5-phosphate reductoisomerase from Bacillus licheniformis (strain ATCC 14580 / DSM 13 / JCM 2505 / CCUG 7422 / NBRC 12200 / NCIMB 9375 / NCTC 10341 / NRRL NRS-1264 / Gibson 46).